The sequence spans 282 residues: 3-methyl-2-oxobutanoate hydroxymethyltransferase (282 aa).

The Mg(2+) site is built by D44 and D83. 3-methyl-2-oxobutanoate contacts are provided by residues 44–45 (DS), D83, and K112. E114 is a binding site for Mg(2+). Residue E181 is the Proton acceptor of the active site.

This sequence belongs to the PanB family. In terms of assembly, homodecamer; pentamer of dimers. Mg(2+) is required as a cofactor.

Its subcellular location is the cytoplasm. The enzyme catalyses 3-methyl-2-oxobutanoate + (6R)-5,10-methylene-5,6,7,8-tetrahydrofolate + H2O = 2-dehydropantoate + (6S)-5,6,7,8-tetrahydrofolate. Its pathway is cofactor biosynthesis; coenzyme A biosynthesis. Its function is as follows. Catalyzes the reversible reaction in which hydroxymethyl group from 5,10-methylenetetrahydrofolate is transferred onto alpha-ketoisovalerate to form ketopantoate. In Pyrococcus abyssi (strain GE5 / Orsay), this protein is 3-methyl-2-oxobutanoate hydroxymethyltransferase.